The sequence spans 20 residues: Brevinin-1DYa (20 aa).

An intrachain disulfide couples Cys-14 to Cys-20.

As to expression, expressed by the skin glands.

It is found in the secreted. Antimicrobial peptide. Has low activity against the Gram-positive bacterium S.aureus and the Gram-negative bacterium E.coli (MIC&lt;15 uM). Has a strong hemolytic activity. This Rana dybowskii (Dybovsky's frog) protein is Brevinin-1DYa.